We begin with the raw amino-acid sequence, 350 residues long: Small ribosomal subunit biogenesis GTPase RsgA (350 aa).

The span at 1-17 shows a compositional bias: polar residues; the sequence is MSKNKLSKGQQRRVNAN. Positions 1–27 are disordered; it reads MSKNKLSKGQQRRVNANHQRRLKTSAE. The CP-type G domain maps to 104–273; the sequence is TSVLTRPDFY…VIDSPGVREF (170 aa). Residues 160–163 and 214–222 each bind GTP; these read NKID and GQSGVGKSS. The Zn(2+) site is built by C297, C302, H304, and C310.

This sequence belongs to the TRAFAC class YlqF/YawG GTPase family. RsgA subfamily. As to quaternary structure, monomer. Associates with 30S ribosomal subunit, binds 16S rRNA. The cofactor is Zn(2+).

The protein localises to the cytoplasm. One of several proteins that assist in the late maturation steps of the functional core of the 30S ribosomal subunit. Helps release RbfA from mature subunits. May play a role in the assembly of ribosomal proteins into the subunit. Circularly permuted GTPase that catalyzes slow GTP hydrolysis, GTPase activity is stimulated by the 30S ribosomal subunit. The protein is Small ribosomal subunit biogenesis GTPase RsgA of Salmonella agona (strain SL483).